Here is a 515-residue protein sequence, read N- to C-terminus: Cytochrome P450 1A1 (515 aa).

Position 225 (F225) interacts with substrate. Residue C459 participates in heme binding.

The protein belongs to the cytochrome P450 family. Heme serves as cofactor.

It is found in the endoplasmic reticulum membrane. The protein resides in the microsome membrane. The enzyme catalyses an organic molecule + reduced [NADPH--hemoprotein reductase] + O2 = an alcohol + oxidized [NADPH--hemoprotein reductase] + H2O + H(+). Its function is as follows. Cytochromes P450 are a group of heme-thiolate monooxygenases. They oxidize a variety of structurally unrelated compounds, including steroids, fatty acids, and xenobiotics. In Microgadus tomcod (Atlantic tomcod), this protein is Cytochrome P450 1A1 (cyp1a1).